Consider the following 245-residue polypeptide: tRNA1(Val) (adenine(37)-N6)-methyltransferase (245 aa).

Belongs to the methyltransferase superfamily. tRNA (adenine-N(6)-)-methyltransferase family.

The protein resides in the cytoplasm. It catalyses the reaction adenosine(37) in tRNA1(Val) + S-adenosyl-L-methionine = N(6)-methyladenosine(37) in tRNA1(Val) + S-adenosyl-L-homocysteine + H(+). Functionally, specifically methylates the adenine in position 37 of tRNA(1)(Val) (anticodon cmo5UAC). This chain is tRNA1(Val) (adenine(37)-N6)-methyltransferase, found in Erwinia tasmaniensis (strain DSM 17950 / CFBP 7177 / CIP 109463 / NCPPB 4357 / Et1/99).